Reading from the N-terminus, the 267-residue chain is 4-hydroxy-tetrahydrodipicolinate reductase (267 aa).

NAD(+)-binding positions include 8 to 13 (GAAGRM) and Asp34. Position 35 (Arg35) interacts with NADP(+). NAD(+)-binding positions include 98-100 (GTT) and 122-125 (AANF). His155 acts as the Proton donor/acceptor in catalysis. Residue His156 participates in (S)-2,3,4,5-tetrahydrodipicolinate binding. Lys159 serves as the catalytic Proton donor. Position 165-166 (165-166 (GT)) interacts with (S)-2,3,4,5-tetrahydrodipicolinate.

It belongs to the DapB family.

The protein resides in the cytoplasm. It carries out the reaction (S)-2,3,4,5-tetrahydrodipicolinate + NAD(+) + H2O = (2S,4S)-4-hydroxy-2,3,4,5-tetrahydrodipicolinate + NADH + H(+). The enzyme catalyses (S)-2,3,4,5-tetrahydrodipicolinate + NADP(+) + H2O = (2S,4S)-4-hydroxy-2,3,4,5-tetrahydrodipicolinate + NADPH + H(+). The protein operates within amino-acid biosynthesis; L-lysine biosynthesis via DAP pathway; (S)-tetrahydrodipicolinate from L-aspartate: step 4/4. Its function is as follows. Catalyzes the conversion of 4-hydroxy-tetrahydrodipicolinate (HTPA) to tetrahydrodipicolinate. The chain is 4-hydroxy-tetrahydrodipicolinate reductase from Pseudomonas amygdali pv. tabaci (Pseudomonas syringae pv. tabaci).